A 333-amino-acid polypeptide reads, in one-letter code: Phosphate acetyltransferase (333 aa).

Belongs to the phosphate acetyltransferase and butyryltransferase family. Homodimer.

The protein resides in the cell membrane. It carries out the reaction acetyl-CoA + phosphate = acetyl phosphate + CoA. Its pathway is metabolic intermediate biosynthesis; acetyl-CoA biosynthesis; acetyl-CoA from acetate: step 2/2. This is Phosphate acetyltransferase (pta) from Methanosarcina thermophila.